Reading from the N-terminus, the 240-residue chain is Thiopurine S-methyltransferase (240 aa).

24–35 (WKDKWVTRHISF) contributes to the S-adenosyl-L-methionine binding site. A substrate-binding site is contributed by Phe-35. An N6-acetyllysine modification is found at Lys-53. S-adenosyl-L-methionine contacts are provided by residues Leu-64, Glu-85, 129-130 (SI), and Arg-147.

The protein belongs to the class I-like SAM-binding methyltransferase superfamily. TPMT family. Monomer.

Its subcellular location is the cytoplasm. The enzyme catalyses S-adenosyl-L-methionine + a thiopurine = S-adenosyl-L-homocysteine + a thiopurine S-methylether.. It catalyses the reaction mercaptopurine + S-adenosyl-L-methionine = 6-methylthiopurine + S-adenosyl-L-homocysteine + H(+). In terms of biological role, catalyzes the S-methylation of thiopurine drugs such as 6-mercaptopurine (also called mercaptopurine, 6-MP or its brand name Purinethol) using S-adenosyl-L-methionine as the methyl donor. TPMT activity modulates the cytotoxic effects of thiopurine prodrugs. A natural substrate for this enzyme has yet to be identified. In Mus spretus (Western Mediterranean mouse), this protein is Thiopurine S-methyltransferase (Tpmt).